The chain runs to 1108 residues: MFLGPWPFSRLLSWFAISSRLSGQHGLTSSKFLRYLCLLALLPLIWWGQALPYKIGVIGPWTCDPFFSKALPEVAAALAIERISRDMSFDRSYSFEYVILNEDCQTSKALTSFISHQQMASGFVGPANPGYCEAASLLGNSWDKGIFSWACVNHELDNKHSYPTFSRTLPSPIRVLVTVMKYFQWAHAGVISSDEDIWVHTANQVSSALRSHGLPVGVVLTSGQDSRSIQKALQQIRQADRIRIIIMCMHSALIGGETQTHFLELAHDLKMTDGTYVFVPYDVLLYSLPYKHSPYQVLRNNQKLREAYDAVLTITVESHEKTFYEAFTEAAAGGEIPEKLDSHQVSPLFGTIYNSIYFIAQAMSNALKENGQASAASLTRHSRNMQFYGFNQLIRTDSNGNGISEYVILDTNGKEWELRGTYTVDMETELLRFRGTPIHFPGGRPTSADAKCWFAQGKICQGGIDPALAMMVCFALLLALLSINGFAYFIRRRINKIQLIKGPNRILLTLEDVTFINPHFGSKRGSRASVSFQIISEVQSGRSPRLSFSSGSLTPATYENSNIAIYQGDWVWLKKFPPGDFGDIKSIKSSASDVFEMMKDLRHENVNPLLGFFYDSGMFAIVSEFCSRRSLEDILTQDDVKLDWMFKSSLLLDLIKGMKYLHHREFIHGRLKSRNCVVDGRFVLKVTDYGFNNILEMLRLSEEEPSEEELLWTAPELLRAPGGIRLGSFAGDVYSFAIIMQEVMVRGAPFCMMDLSAKEVIDRLKMPPPVYRPVVSPEFAPPECLQLMKQCWAEAAEQRPTFDEIFNQFKTFNKGKKTNIIDSMLRMLEQYSSNLEDLIRERTEELEIEKQKTEKLLTQMLPPSVAESLKKGCTVEPEGFDLVTLYFSDIVGFTTISAMSEPIEVVDLLNDLYTLFDAIIGSHDVYKVETIGDAYMVASGLPKRNGSRHAAEIANMSLDILSSVGTFKMRHMPEVPVRIRIGLHTGPVVAGVVGLTMPRYCLFGDTVNTASRMESTGLPYRIHVSLSTVTILRTLSEGYEVELRGRTELKGKGTEETFWLVGKKGFTKPLPVPPPVGKDGQVGHGLQPAEIAAFQRRKAERQLVRNKP.

Residues 1 to 50 form the signal peptide; that stretch reads MFLGPWPFSRLLSWFAISSRLSGQHGLTSSKFLRYLCLLALLPLIWWGQA. Over 51-465 the chain is Extracellular; that stretch reads LPYKIGVIGP…QGKICQGGID (415 aa). Cys104 and Cys132 are joined by a disulfide. The helical transmembrane segment at 466-490 threads the bilayer; the sequence is PALAMMVCFALLLALLSINGFAYFI. Residues 491–1108 lie on the Cytoplasmic side of the membrane; it reads RRRINKIQLI…AERQLVRNKP (618 aa). The Protein kinase domain maps to 532–812; the sequence is FQIISEVQSG…DEIFNQFKTF (281 aa). The region spanning 884 to 1014 is the Guanylate cyclase domain; that stretch reads TLYFSDIVGF…DTVNTASRME (131 aa).

It belongs to the adenylyl cyclase class-4/guanylyl cyclase family. As to quaternary structure, homodimer. Interacts with RD3; promotes the exit of GUCY2F from the endoplasmic reticulum and its trafficking to the photoreceptor outer segments. There are 9 conserved cysteine residues in sensory guanylate cyclases, 6 in the extracellular domain, which may be involved in intra- or interchain disulfide bonds. Expressed only in the eye.

Its subcellular location is the membrane. The protein resides in the photoreceptor outer segment membrane. The catalysed reaction is GTP = 3',5'-cyclic GMP + diphosphate. With respect to regulation, activated by GUCA1B when free calcium ions concentration is low, and inhibited by GUCA1B when free calcium ions concentration is high. Inhibited by RD3. Its function is as follows. Responsible for the synthesis of cyclic GMP (cGMP) in rods and cones of photoreceptors. Plays an essential role in phototransduction, by mediating cGMP replenishment. May also participate in the trafficking of membrane-asociated proteins to the photoreceptor outer segment membrane. This chain is Retinal guanylyl cyclase 2 (Gucy2f), found in Rattus norvegicus (Rat).